The sequence spans 464 residues: Asparagine--tRNA ligase (464 aa).

This sequence belongs to the class-II aminoacyl-tRNA synthetase family. Homodimer.

The protein resides in the cytoplasm. The enzyme catalyses tRNA(Asn) + L-asparagine + ATP = L-asparaginyl-tRNA(Asn) + AMP + diphosphate + H(+). The chain is Asparagine--tRNA ligase from Acetivibrio thermocellus (strain ATCC 27405 / DSM 1237 / JCM 9322 / NBRC 103400 / NCIMB 10682 / NRRL B-4536 / VPI 7372) (Clostridium thermocellum).